The primary structure comprises 538 residues: D-alanyl-D-alanine carboxypeptidase (538 aa).

The tract at residues 1–21 (MKQSSPEPLRPRRTGGRGGAR) is disordered. Positions 1-49 (MKQSSPEPLRPRRTGGRGGARRAAALVTIPLLPMTLLGASPALADASGA) are cleaved as a signal peptide. The active-site Acyl-ester intermediate is the serine 98. The active-site Proton acceptor is lysine 101. The tract at residues 146-319 (TLSAEDLDAM…KGDVGLGGVP (174 aa)) is absent in class-A beta-lactamases. The active site involves serine 347. A substrate-binding site is contributed by lysine 459. A propeptide spans 516-538 (GARMMRGPVQGSGELECSWVQAC) (removed in mature form).

Belongs to the peptidase S13 family.

Its subcellular location is the secreted. It carries out the reaction Preferential cleavage: (Ac)2-L-Lys-D-Ala-|-D-Ala. Also transpeptidation of peptidyl-alanyl moieties that are N-acyl substituents of D-alanine.. It participates in cell wall biogenesis; peptidoglycan biosynthesis. With respect to regulation, inhibited by benzylpenicillin, cephaloridine, ampicillin and cetiofur. In terms of biological role, removes C-terminal D-alanyl residues from sugar-peptide cell wall precursors. This chain is D-alanyl-D-alanine carboxypeptidase (dac), found in Actinomadura sp. (strain R39).